The chain runs to 476 residues: Membrane-bound lytic murein transglycosylase F (476 aa).

Positions 1 to 15 (MRSFLLILFCVSLLT) are cleaved as a signal peptide. Residues 16 to 258 (GCQGERVDAA…HLNEKYFAHV (243 aa)) are non-LT domain. The segment at 259–476 (KRFDYVDTRA…QSEISAAQPN (218 aa)) is LT domain. Glutamate 303 is an active-site residue. Positions 456–476 (EAQQQTAEKQSQSEISAAQPN) are disordered.

The protein in the N-terminal section; belongs to the bacterial solute-binding protein 3 family. It in the C-terminal section; belongs to the transglycosylase Slt family.

The protein resides in the cell outer membrane. It catalyses the reaction Exolytic cleavage of the (1-&gt;4)-beta-glycosidic linkage between N-acetylmuramic acid (MurNAc) and N-acetylglucosamine (GlcNAc) residues in peptidoglycan, from either the reducing or the non-reducing ends of the peptidoglycan chains, with concomitant formation of a 1,6-anhydrobond in the MurNAc residue.. In terms of biological role, murein-degrading enzyme that degrades murein glycan strands and insoluble, high-molecular weight murein sacculi, with the concomitant formation of a 1,6-anhydromuramoyl product. Lytic transglycosylases (LTs) play an integral role in the metabolism of the peptidoglycan (PG) sacculus. Their lytic action creates space within the PG sacculus to allow for its expansion as well as for the insertion of various structures such as secretion systems and flagella. The sequence is that of Membrane-bound lytic murein transglycosylase F from Shewanella loihica (strain ATCC BAA-1088 / PV-4).